Here is a 502-residue protein sequence, read N- to C-terminus: Glycerol kinase (502 aa).

Residue Thr13 coordinates ADP. Residues Thr13, Thr14, and Ser15 each coordinate ATP. Thr13 contributes to the sn-glycerol 3-phosphate binding site. Position 17 (Arg17) interacts with ADP. Arg83, Glu84, Tyr136, and Asp246 together coordinate sn-glycerol 3-phosphate. Arg83, Glu84, Tyr136, Asp246, and Gln247 together coordinate glycerol. Residues Thr268 and Gly311 each coordinate ADP. Residues Thr268, Gly311, Gln315, and Gly412 each coordinate ATP. ADP contacts are provided by Gly412 and Asn416.

Belongs to the FGGY kinase family.

It carries out the reaction glycerol + ATP = sn-glycerol 3-phosphate + ADP + H(+). It participates in polyol metabolism; glycerol degradation via glycerol kinase pathway; sn-glycerol 3-phosphate from glycerol: step 1/1. Its activity is regulated as follows. Inhibited by fructose 1,6-bisphosphate (FBP). Its function is as follows. Key enzyme in the regulation of glycerol uptake and metabolism. Catalyzes the phosphorylation of glycerol to yield sn-glycerol 3-phosphate. The polypeptide is Glycerol kinase (Francisella tularensis subsp. mediasiatica (strain FSC147)).